The following is a 92-amino-acid chain: PqqA binding protein (92 aa).

The protein belongs to the PqqD family. Monomer. Interacts with PqqE.

It participates in cofactor biosynthesis; pyrroloquinoline quinone biosynthesis. In terms of biological role, functions as a PqqA binding protein and presents PqqA to PqqE, in the pyrroloquinoline quinone (PQQ) biosynthetic pathway. The polypeptide is PqqA binding protein (Xanthomonas axonopodis pv. citri (strain 306)).